Consider the following 490-residue polypeptide: Limb region 1 protein homolog (490 aa).

The Extracellular segment spans residues 1-19 (MEGQDEVSAREQHFHSQVR). A helical membrane pass occupies residues 20–40 (ESTICFLLFAILYVVSYFIIT). The Cytoplasmic portion of the chain corresponds to 41-62 (RYKRKSDEQEDEDAIVNRISLF). Residues 63-83 (LSTFTLAVSAGAVLLLPFSII) traverse the membrane as a helical segment. Topologically, residues 84–110 (SNEILLSFPQNYYIQWLNGSLIHGLWN) are extracellular. Residues 111-131 (LASLFSNLCLFVLMPFAFFFL) traverse the membrane as a helical segment. Residues 132-151 (ESEGFAGLKKGIRARILETL) lie on the Cytoplasmic side of the membrane. A helical membrane pass occupies residues 152 to 172 (VMLLLLALLILGIVWVASALI). Residues 173–187 (DNDAASMESLYDLWE) lie on the Extracellular side of the membrane. The helical transmembrane segment at 188-208 (FYLPYLYSCISLMGCLLLLLC) threads the bilayer. Topologically, residues 209-291 (TPVGLSRMFT…RKKASAWERN (83 aa)) are cytoplasmic. Positions 250–287 (RLNGLSSSVEYNIMELEQELENVKTLKTKLERRKKASA) form a coiled coil. The helical transmembrane segment at 292 to 312 (LVYPAVMVLLLIETSISVLLV) threads the bilayer. Residues 313 to 339 (ACNILCLLVDETAMPKGTRGPGIGNAS) lie on the Extracellular side of the membrane. A helical membrane pass occupies residues 340-360 (LSTFGFVGAALEIILIFYLMV). Residues 361–383 (SSVVGFYSLRFFGNFTPKKDDTT) are Cytoplasmic-facing. A helical membrane pass occupies residues 384 to 404 (MTKIIGNCVSILVLSSALPVM). Residues 405-426 (SRTLGITRFDLLGDFGRFNWLG) lie on the Extracellular side of the membrane. The helical transmembrane segment at 427 to 447 (NFYIVLSYNLLFAIVTTLCLV) threads the bilayer. Residues 448 to 490 (RKFTSAVREELFKALGLHKLHLPNTSRDSETAKPSVNGHQKAL) lie on the Cytoplasmic side of the membrane.

Belongs to the LIMR family. Widely expressed with strongest expression in heart and pancreas.

Its subcellular location is the membrane. In terms of biological role, putative membrane receptor. In Homo sapiens (Human), this protein is Limb region 1 protein homolog (LMBR1).